Here is a 211-residue protein sequence, read N- to C-terminus: Dihydrofolate reductase (211 aa).

The DHFR domain occupies 7-210 (PIVGIVACLQ…YCFEFTLYNR (204 aa)). Residues A13 and 20–26 (GIGFRGG) contribute to the NADP(+) site. Residue 34–39 (EMKYFR) coordinates substrate. 58–60 (RKT) lines the NADP(+) pocket. R74 provides a ligand contact to substrate. NADP(+)-binding positions include 80–82 (SRS) and 123–130 (GGGEVYSQ).

The protein belongs to the dihydrofolate reductase family.

The catalysed reaction is (6S)-5,6,7,8-tetrahydrofolate + NADP(+) = 7,8-dihydrofolate + NADPH + H(+). The protein operates within cofactor biosynthesis; tetrahydrofolate biosynthesis; 5,6,7,8-tetrahydrofolate from 7,8-dihydrofolate: step 1/1. Key enzyme in folate metabolism. Catalyzes an essential reaction for de novo glycine and purine synthesis, and for DNA precursor synthesis. The polypeptide is Dihydrofolate reductase (DFR1) (Saccharomyces cerevisiae (strain ATCC 204508 / S288c) (Baker's yeast)).